The primary structure comprises 325 residues: NADH-quinone oxidoreductase subunit H (325 aa).

The next 8 membrane-spanning stretches (helical) occupy residues 11-31 (ILIS…CGAF), 81-101 (AIFT…FAIV), 114-134 (IGIL…LFAG), 154-174 (LSYE…AGSF), 186-206 (VWNV…GVAV), 237-257 (FFVG…TLFF), 265-285 (LPPF…FILI), and 304-324 (VCLP…LYNA).

This sequence belongs to the complex I subunit 1 family. NDH-1 is composed of 13 different subunits. Subunits NuoA, H, J, K, L, M, N constitute the membrane sector of the complex.

Its subcellular location is the cell inner membrane. It carries out the reaction a quinone + NADH + 5 H(+)(in) = a quinol + NAD(+) + 4 H(+)(out). NDH-1 shuttles electrons from NADH, via FMN and iron-sulfur (Fe-S) centers, to quinones in the respiratory chain. The immediate electron acceptor for the enzyme in this species is believed to be ubiquinone. Couples the redox reaction to proton translocation (for every two electrons transferred, four hydrogen ions are translocated across the cytoplasmic membrane), and thus conserves the redox energy in a proton gradient. This subunit may bind ubiquinone. This is NADH-quinone oxidoreductase subunit H from Yersinia pseudotuberculosis serotype O:1b (strain IP 31758).